Reading from the N-terminus, the 449-residue chain is Guanine nucleotide-binding protein alpha-2 subunit (449 aa).

Residues 1–91 (MGLCASSEKN…TATANTSGSQ (91 aa)) form a disordered region. Glycine 2 is lipidated: N-myristoyl glycine. Cysteine 4 carries S-palmitoyl cysteine lipidation. Composition is skewed to polar residues over residues 7–23 (SEKNGSTPDTQTASAGS) and 38–48 (QKTVRTVNTAN). The span at 49-59 (QQEKQQQRQQQ) shows a compositional bias: low complexity. Positions 72–91 (NGSINNAISPTATANTSGSQ) are enriched in polar residues. The G-alpha domain occupies 122 to 448 (KELKVLLLGA…ENTLKDSGVL (327 aa)). Residues 125–138 (KVLLLGAGESGKST) form a G1 motif region. GTP is bound by residues glutamate 133, serine 134, glycine 135, lysine 136, serine 137, threonine 138, aspartate 245, leucine 270, threonine 276, glycine 299, asparagine 365, lysine 366, aspartate 368, and alanine 420. Residue serine 137 participates in Mg(2+) binding. The segment at 268–276 (DILRSRQMT) is G2 motif. Threonine 276 provides a ligand contact to Mg(2+). Residues 292–301 (MHIYDVGGQR) form a G3 motif region. The segment at 361–368 (VLFLNKID) is G4 motif. The tract at residues 418 to 423 (TQATDT) is G5 motif.

Belongs to the G-alpha family. G(q) subfamily. G proteins are composed of 3 units; alpha, beta and gamma. The alpha chain contains the guanine nucleotide binding site. GPA2 interacts with the kelch repeat beta-mimic proteins GPB1 and GPB2 and with the gamma subunit GPG1. Interacts with the G protein coupled receptor GPR1. Also interacts with regulators of G protein signaling (RGS) protein RGS2. Mg(2+) is required as a cofactor. Post-translationally, myristoylation at Gly-2 and palmitoylation at Cys-4 are required for membrane localization and function of the protein.

The protein localises to the cell membrane. Its activity is regulated as follows. Alternates between an inactive form bound to GDP and an active form bound to GTP. Activated by the G protein coupled receptor (GPCR) GPR1, which serves as a guanine nucleotide-exchange factor (GEF), and inactivated by RGS2, acting as a GTPase-activating protein (GAP) for GPA2. Functionally, alpha subunit of the heterotrimeric guanine nucleotide-binding protein (G protein) involved in glucose-induced cAMP signaling. Binds to its cognate transmembrane receptor GPR1, which senses extracellular carbon sources, and activates cAMP-PKA signaling and governs diploid pseudohyphal differentiation and haploid invasive growth. The G protein beta-mimic proteins GPB1 and GPB2 inhibit GPA2-GPR1 coupling, probably to reduce signaling in the absence of glucose. The sequence is that of Guanine nucleotide-binding protein alpha-2 subunit (GPA2) from Saccharomyces cerevisiae (strain ATCC 204508 / S288c) (Baker's yeast).